Here is a 221-residue protein sequence, read N- to C-terminus: Iron-sulfur cluster repair protein YtfE (221 aa).

This sequence belongs to the RIC family. YtfE subfamily. In terms of assembly, homodimer.

Its subcellular location is the cytoplasm. Di-iron-containing protein involved in the repair of iron-sulfur clusters damaged by oxidative and nitrosative stress conditions. The chain is Iron-sulfur cluster repair protein YtfE from Pectobacterium atrosepticum (strain SCRI 1043 / ATCC BAA-672) (Erwinia carotovora subsp. atroseptica).